A 336-amino-acid chain; its full sequence is Octanoyltransferase (336 aa).

Over residues 1–16 (MPKSALMSSSFQTSVS) the composition is skewed to polar residues. Disordered regions lie at residues 1–22 (MPKSALMSSSFQTSVSPRPLPV) and 48–88 (QGKG…GGGR). The tract at residues 1 to 92 (MPKSALMSSS…AAGGGRTIRD (92 aa)) is unknown. The tract at residues 93–336 (VKEAAFDVLD…GQEALSVASP (244 aa)) is lipB domain. Residues 124-318 (VGGRPTLLLV…AFALTFADYD (195 aa)) enclose the BPL/LPL catalytic domain. Residues 170–177 (RGGDVTYH), 244–246 (SIG), and 257–259 (GIG) each bind substrate. Cysteine 275 serves as the catalytic Acyl-thioester intermediate.

This sequence in the C-terminal section; belongs to the LipB family.

Its subcellular location is the cytoplasm. It carries out the reaction octanoyl-[ACP] + L-lysyl-[protein] = N(6)-octanoyl-L-lysyl-[protein] + holo-[ACP] + H(+). Its pathway is protein modification; protein lipoylation via endogenous pathway; protein N(6)-(lipoyl)lysine from octanoyl-[acyl-carrier-protein]: step 1/2. Catalyzes the transfer of endogenously produced octanoic acid from octanoyl-acyl-carrier-protein onto the lipoyl domains of lipoate-dependent enzymes. Lipoyl-ACP can also act as a substrate although octanoyl-ACP is likely to be the physiological substrate. This Deinococcus radiodurans (strain ATCC 13939 / DSM 20539 / JCM 16871 / CCUG 27074 / LMG 4051 / NBRC 15346 / NCIMB 9279 / VKM B-1422 / R1) protein is Octanoyltransferase.